Reading from the N-terminus, the 120-residue chain is Chaperonin GroEL (120 aa).

Residue 23-27 (DGTTT) participates in ATP binding.

It belongs to the chaperonin (HSP60) family. In terms of assembly, forms a cylinder of 14 subunits composed of two heptameric rings stacked back-to-back. Interacts with the co-chaperonin GroES.

Its subcellular location is the cytoplasm. It catalyses the reaction ATP + H2O + a folded polypeptide = ADP + phosphate + an unfolded polypeptide.. Functionally, together with its co-chaperonin GroES, plays an essential role in assisting protein folding. The GroEL-GroES system forms a nano-cage that allows encapsulation of the non-native substrate proteins and provides a physical environment optimized to promote and accelerate protein folding. This Mycolicibacterium pulveris (Mycobacterium pulveris) protein is Chaperonin GroEL.